Reading from the N-terminus, the 371-residue chain is Interstrand DNA cross-link repair glycosylase (371 aa).

The QXQ; important for activity signature appears at 37-39 (QAQ).

It belongs to the DNA glycosylase AlkZ-like family.

Functionally, DNA glycosylase involved in the repair of interstrand DNA cross-links (ICLs), which are highly toxic DNA lesions that covalently tether the opposing strands of DNA, thereby inhibiting essential cellular processes such as DNA replication and transcription. Acts by unhooking both sides of the ICLs, forming abasic (AP) sites on both strands. AlkZ specifically repairs DNA damage induced by azinomycin B (AZB), a natural product with potent antibiotic and antitumor activities that interacts covalently with duplex DNA and forms ICLs. AlkZ thus confers self-resistance to azinomycin B, which is produced by S.sahachiroi. It may also protect target sites by protein-DNA interaction. Binds sequence non-specifically to native DNA and structure-specifically to azinomycin B-modified sites, with higher affinity to azinomycin B-modified sites and lower affinity to native DNA duplex. In vitro, also acts on monoadducts and can catalyze the excision of N7-methylguanine (7mGua) from an oligonucleotide containing N7-methyldeoxyguanosine (d7mG). Is a monofunctional DNA glycosylase that does not have lyase activity. The polypeptide is Interstrand DNA cross-link repair glycosylase (Streptomyces sahachiroi).